The sequence spans 276 residues: NADH-cytochrome b5 reductase 2 (276 aa).

An FAD-binding FR-type domain is found at 15-127 (EAKYPLPLIE…RGPTGRLFYN (113 aa)). Lys-17 carries the post-translational modification N6-acetyllysine. Tyr-18 carries the post-translational modification Phosphotyrosine. FAD is bound by residues 107–137 (ENMKIGDTILFRGPTGRLFYNEPGTLLIKTD) and 146–181 (LVHHLGMIAGGTGITPMLQLIRHITKDTSDGTRMSL).

The protein belongs to the flavoprotein pyridine nucleotide cytochrome reductase family. The cofactor is FAD.

The enzyme catalyses 2 Fe(III)-[cytochrome b5] + NADH = 2 Fe(II)-[cytochrome b5] + NAD(+) + H(+). Functionally, NADH-cytochrome b5 reductases are involved in desaturation and elongation of fatty acids, cholesterol biosynthesis, drug metabolism, and, in erythrocyte, methemoglobin reduction. Responsible for NADH-dependent lucigenin chemiluminescence in spermatozoa by reducing both lucigenin and 2-[4-iodophenyl]-3-[4-nitrophenyl]-5-[2,4-disulfophenyl]-2H tetrazolium monosodium salt (WST-1). This is NADH-cytochrome b5 reductase 2 (Cyb5r2) from Rattus norvegicus (Rat).